A 333-amino-acid polypeptide reads, in one-letter code: Biotin synthase (333 aa).

One can recognise a Radical SAM core domain in the interval 40–269 (YRVQLASLLS…HARVRLSAGR (230 aa)). C55, C59, and C62 together coordinate [4Fe-4S] cluster. C100, C132, C192, and R264 together coordinate [2Fe-2S] cluster.

The protein belongs to the radical SAM superfamily. Biotin synthase family. In terms of assembly, homodimer. [4Fe-4S] cluster serves as cofactor. Requires [2Fe-2S] cluster as cofactor.

The enzyme catalyses (4R,5S)-dethiobiotin + (sulfur carrier)-SH + 2 reduced [2Fe-2S]-[ferredoxin] + 2 S-adenosyl-L-methionine = (sulfur carrier)-H + biotin + 2 5'-deoxyadenosine + 2 L-methionine + 2 oxidized [2Fe-2S]-[ferredoxin]. It functions in the pathway cofactor biosynthesis; biotin biosynthesis; biotin from 7,8-diaminononanoate: step 2/2. Catalyzes the conversion of dethiobiotin (DTB) to biotin by the insertion of a sulfur atom into dethiobiotin via a radical-based mechanism. The protein is Biotin synthase of Synechococcus sp. (strain CC9902).